The primary structure comprises 162 residues: 6,7-dimethyl-8-ribityllumazine synthase (162 aa).

Residues Phe-23, 61–63 (AYE), and 85–87 (AVI) contribute to the 5-amino-6-(D-ribitylamino)uracil site. 90-91 (DT) provides a ligand contact to (2S)-2-hydroxy-3-oxobutyl phosphate. His-93 (proton donor) is an active-site residue. Phe-118 lines the 5-amino-6-(D-ribitylamino)uracil pocket. A (2S)-2-hydroxy-3-oxobutyl phosphate-binding site is contributed by Arg-132.

Belongs to the DMRL synthase family.

It carries out the reaction (2S)-2-hydroxy-3-oxobutyl phosphate + 5-amino-6-(D-ribitylamino)uracil = 6,7-dimethyl-8-(1-D-ribityl)lumazine + phosphate + 2 H2O + H(+). The protein operates within cofactor biosynthesis; riboflavin biosynthesis; riboflavin from 2-hydroxy-3-oxobutyl phosphate and 5-amino-6-(D-ribitylamino)uracil: step 1/2. Its function is as follows. Catalyzes the formation of 6,7-dimethyl-8-ribityllumazine by condensation of 5-amino-6-(D-ribitylamino)uracil with 3,4-dihydroxy-2-butanone 4-phosphate. This is the penultimate step in the biosynthesis of riboflavin. This is 6,7-dimethyl-8-ribityllumazine synthase from Synechococcus sp. (strain CC9902).